The primary structure comprises 445 residues: GTPase Der (445 aa).

EngA-type G domains are found at residues 3–167 (PVIA…YAGE) and 180–353 (IKIA…AAAM). Residues 9 to 16 (GRPNVGKS), 56 to 60 (DTGGF), 119 to 122 (NKAE), 186 to 193 (GRPNVGKS), 233 to 237 (DTAGL), and 298 to 301 (NKWD) each bind GTP. Residues 354–438 (KKLPTPKLTR…PLRIEFRSST (85 aa)) form the KH-like domain.

This sequence belongs to the TRAFAC class TrmE-Era-EngA-EngB-Septin-like GTPase superfamily. EngA (Der) GTPase family. In terms of assembly, associates with the 50S ribosomal subunit.

Its function is as follows. GTPase that plays an essential role in the late steps of ribosome biogenesis. This chain is GTPase Der, found in Burkholderia pseudomallei (strain 1106a).